Here is a 273-residue protein sequence, read N- to C-terminus: 4-hydroxy-tetrahydrodipicolinate reductase (273 aa).

NAD(+) contacts are provided by residues 12 to 17 and Glu38; that span reads GAGGRM. Residue Arg39 participates in NADP(+) binding. NAD(+) is bound by residues 102–104 and 126–129; these read GTT and AANF. The active-site Proton donor/acceptor is the His159. His160 provides a ligand contact to (S)-2,3,4,5-tetrahydrodipicolinate. Catalysis depends on Lys163, which acts as the Proton donor. 169 to 170 provides a ligand contact to (S)-2,3,4,5-tetrahydrodipicolinate; it reads GT.

Belongs to the DapB family. As to quaternary structure, homotetramer.

The protein resides in the cytoplasm. It carries out the reaction (S)-2,3,4,5-tetrahydrodipicolinate + NAD(+) + H2O = (2S,4S)-4-hydroxy-2,3,4,5-tetrahydrodipicolinate + NADH + H(+). It catalyses the reaction (S)-2,3,4,5-tetrahydrodipicolinate + NADP(+) + H2O = (2S,4S)-4-hydroxy-2,3,4,5-tetrahydrodipicolinate + NADPH + H(+). Its pathway is amino-acid biosynthesis; L-lysine biosynthesis via DAP pathway; (S)-tetrahydrodipicolinate from L-aspartate: step 4/4. In terms of biological role, catalyzes the conversion of 4-hydroxy-tetrahydrodipicolinate (HTPA) to tetrahydrodipicolinate. This is 4-hydroxy-tetrahydrodipicolinate reductase from Salmonella agona (strain SL483).